A 596-amino-acid chain; its full sequence is Cell adhesion molecule CEACAM20 (596 aa).

The first 30 residues, 1 to 30 (MGPADSWGHHWMGILLSASLCTVWSPPAAA), serve as a signal peptide directing secretion. Residues 31–450 (QLTLNANPLD…SSLSSGAIAG (420 aa)) are Extracellular-facing. Ig-like C2-type domains lie at 58 to 154 (PQIH…PIFL), 160 to 246 (PDPV…GTLK), 256 to 341 (PQVV…LELT), and 346 to 432 (PDQV…TSVL). Cys90 and Cys138 are joined by a disulfide. N-linked (GlcNAc...) asparagine glycans are attached at residues Asn96 and Asn105. An intrachain disulfide couples Cys276 to Cys324. Residues Asn280, Asn306, Asn317, Asn368, and Asn415 are each glycosylated (N-linked (GlcNAc...) asparagine). A disulfide bridge connects residues Cys375 and Cys416. Residues 451–471 (IVIGILAVIAVASELGYFLCI) traverse the membrane as a helical segment. Residues 472–585 (RNARRPSRKT…SIYEELVNPE (114 aa)) are Cytoplasmic-facing. Disordered regions lie at residues 477 to 510 (PSRK…LSPE) and 527 to 563 (QPPD…LMPP). Residues 501-510 (EPSSESLSPE) show a composition bias toward low complexity. Residues 553-562 (WKPPPKPLMP) show a composition bias toward pro residues. Residues Tyr578 and Tyr589 each carry the phosphotyrosine modification.

It belongs to the immunoglobulin superfamily. CEA family. In terms of assembly, interacts (via extracellular domain) with PTPRH (via extracellular domain); the interaction dephosphorylates CEACAM20. Interacts (phosphorylated form) with SYK (via SH2 domains); the interaction further enhances CEACAM20 phosphorylation. Phosphorylated on tyrosine residues by SYK, SRC and FYN in vitro.

The protein localises to the cell projection. It is found in the microvillus membrane. Its subcellular location is the apical cell membrane. Functionally, together with the tyrosine-protein kinase SYK, enhances production of the cytokine CXCL8/IL-8 via the NFKB pathway and may thus have a role in the intestinal immune response. This is Cell adhesion molecule CEACAM20 from Homo sapiens (Human).